The following is a 117-amino-acid chain: Large ribosomal subunit protein bL20 (117 aa).

It belongs to the bacterial ribosomal protein bL20 family.

Functionally, binds directly to 23S ribosomal RNA and is necessary for the in vitro assembly process of the 50S ribosomal subunit. It is not involved in the protein synthesizing functions of that subunit. The sequence is that of Large ribosomal subunit protein bL20 from Rickettsia bellii (strain OSU 85-389).